Consider the following 629-residue polypeptide: tRNA uridine 5-carboxymethylaminomethyl modification enzyme MnmG (629 aa).

FAD is bound by residues 13–18 (GGGHAG), Val-125, and Ser-180. Residue 273 to 287 (GPRYCPSIEDKVMRF) participates in NAD(+) binding. Residue Gln-370 participates in FAD binding.

This sequence belongs to the MnmG family. As to quaternary structure, homodimer. Heterotetramer of two MnmE and two MnmG subunits. FAD is required as a cofactor.

The protein resides in the cytoplasm. NAD-binding protein involved in the addition of a carboxymethylaminomethyl (cmnm) group at the wobble position (U34) of certain tRNAs, forming tRNA-cmnm(5)s(2)U34. This is tRNA uridine 5-carboxymethylaminomethyl modification enzyme MnmG from Psychromonas ingrahamii (strain DSM 17664 / CCUG 51855 / 37).